The following is a 294-amino-acid chain: 33 kDa chaperonin (294 aa).

2 cysteine pairs are disulfide-bonded: C238/C240 and C271/C274.

This sequence belongs to the HSP33 family. In terms of processing, under oxidizing conditions two disulfide bonds are formed involving the reactive cysteines. Under reducing conditions zinc is bound to the reactive cysteines and the protein is inactive.

Its subcellular location is the cytoplasm. Redox regulated molecular chaperone. Protects both thermally unfolding and oxidatively damaged proteins from irreversible aggregation. Plays an important role in the bacterial defense system toward oxidative stress. In Staphylococcus carnosus (strain TM300), this protein is 33 kDa chaperonin.